Here is a 221-residue protein sequence, read N- to C-terminus: Carbonic anhydrase (221 aa).

Positions 38, 40, 99, and 102 each coordinate Zn(2+).

It belongs to the beta-class carbonic anhydrase family. Zn(2+) serves as cofactor.

It catalyses the reaction hydrogencarbonate + H(+) = CO2 + H2O. The protein is Carbonic anhydrase (cynT) of Helicobacter pylori (strain ATCC 700392 / 26695) (Campylobacter pylori).